The following is a 1527-amino-acid chain: DNA (cytosine-5)-methyltransferase 1A (1527 aa).

Disordered regions lie at residues 1-62 and 661-718; these read MAKS…PKRA and GDTK…KEIK. 2 stretches are compositionally biased toward acidic residues: residues 25 to 36 and 664 to 692; these read EPVENENLESEF and KEED…EVNV. The segment covering 709 to 718 has biased composition (basic and acidic residues); that stretch reads SSADTRKEIK. 2 consecutive BAH domains span residues 742-874 and 910-1049; these read LSIS…FSLP and ITYN…KQLP. The region spanning 1092–1526 is the SAM-dependent MTase C5-type domain; it reads LATLDIFAGC…RKLKQAIDAK (435 aa). C1197 is a catalytic residue.

The protein belongs to the class I-like SAM-binding methyltransferase superfamily. C5-methyltransferase family. As to expression, expressed in roots and inflorescences. Expressed in roots, panicles, anthers, pistils, endosperm and imbibed embryos. Expressed in tissues containing actively replicating and dividing cells, such as shoot and root meristems.

The protein resides in the nucleus. The catalysed reaction is a 2'-deoxycytidine in DNA + S-adenosyl-L-methionine = a 5-methyl-2'-deoxycytidine in DNA + S-adenosyl-L-homocysteine + H(+). Probably methylates CpG residues and maintains DNA methylation. May be involved in methylation-dependent gene silencing. May play a minor role in the maintenance of DNA methylation. In Oryza sativa subsp. japonica (Rice), this protein is DNA (cytosine-5)-methyltransferase 1A.